A 156-amino-acid chain; its full sequence is 17.7 kDa class II heat shock protein (156 aa).

One can recognise a sHSP domain in the interval 39–156; sequence DAKAMAATPA…KPKTIQVQVA (118 aa).

The protein belongs to the small heat shock protein (HSP20) family. As to quaternary structure, may form oligomeric structures.

It is found in the cytoplasm. The chain is 17.7 kDa class II heat shock protein (HSP17.7) from Arabidopsis thaliana (Mouse-ear cress).